The primary structure comprises 91 residues: Putative membrane protein insertion efficiency factor (91 aa).

A disordered region spans residues 72–91 (SGGNDPVPEKLTHINHQHEK). A compositionally biased stretch (basic and acidic residues) spans 78 to 91 (VPEKLTHINHQHEK).

This sequence belongs to the UPF0161 family.

The protein resides in the cell inner membrane. Its function is as follows. Could be involved in insertion of integral membrane proteins into the membrane. This chain is Putative membrane protein insertion efficiency factor, found in Pseudoalteromonas translucida (strain TAC 125).